A 528-amino-acid chain; its full sequence is MDVEGAFADEEELAPHGGWASKDFDPSEFGYDDDFAPDDSDEDEDDDDYEFDEDDFAAPDFGEDYTEEEWEELERSLGIERREHLEESLCTVAIVGRPNVGKSTLVNRFIGRREAVVEDFPGVTRDRISYLSDWGGQRFWVQDTGGWDPNVKGIHASIAHQAELAMASADVIVFVVDTKVGITETDAVMARKLKRADVPVILVANKFDSDSQWADMAEFYALGLGDPFPVSAQHGRGGADVLDKILESFPEEPRAKSIVEGPRRVALVGKPNVGKSSLLNKFAGEERSVVDNVAGTTVDPVDSIIQLDQKMWKFIDTAGLRKKVKTATGHEFYASLRTRSVIDSAEVCVLLIDSSEPITEQDQRVLAMITDAGKALVVAFNKWDLMDEDRRWELDRELDLQLAHIPWAKRINISAKTGRALQRLEPAMIEALENWDRRVSTGQLNNWLREAIAANPPPMRGGRLPRVLFATQASTRPPVIVLFTTGFLEAGYRRYLERKFRERFGFNGTPIRIAVRVRERRGKGGKKQ.

Acidic residues-rich tracts occupy residues Met1–Glu12 and Gly30–Gly62. The segment at Met1–Gly62 is disordered. EngA-type G domains lie at Cys90–Pro253 and Arg263–Asp436. Residues Gly96–Ser103, Asp143–Trp147, Asn205–Asp208, Gly269–Ser276, Asp316–Leu320, and Asn381–Asp384 contribute to the GTP site. In terms of domain architecture, KH-like spans Arg437–Glu519.

The protein belongs to the TRAFAC class TrmE-Era-EngA-EngB-Septin-like GTPase superfamily. EngA (Der) GTPase family. Associates with the 50S ribosomal subunit.

In terms of biological role, GTPase that plays an essential role in the late steps of ribosome biogenesis. The chain is GTPase Der from Corynebacterium efficiens (strain DSM 44549 / YS-314 / AJ 12310 / JCM 11189 / NBRC 100395).